Here is a 235-residue protein sequence, read N- to C-terminus: Isoprenyl transferase (235 aa).

The active site involves Asp-21. Residue Asp-21 participates in Mg(2+) binding. Substrate contacts are provided by residues 22–25 (GNAR), Trp-26, Lys-34, His-38, and 66–68 (SSE). The Proton acceptor role is filled by Asn-69. Substrate-binding positions include Trp-70, Arg-72, Arg-183, and 189–191 (RIS). Glu-202 provides a ligand contact to Mg(2+).

It belongs to the UPP synthase family. Homodimer. The cofactor is Mg(2+).

Its function is as follows. Catalyzes the condensation of isopentenyl diphosphate (IPP) with allylic pyrophosphates generating different type of terpenoids. The protein is Isoprenyl transferase of Rickettsia conorii (strain ATCC VR-613 / Malish 7).